The following is a 383-amino-acid chain: L-lactate dehydrogenase (383 aa).

Residues 1-380 enclose the FMN hydroxy acid dehydrogenase domain; sequence MIVSSTTDFR…NETILAERVP (380 aa). Position 24 (Tyr24) interacts with substrate. FMN is bound by residues Ser106 and Gln127. Tyr129 is a substrate binding site. Residue Thr155 participates in FMN binding. Residue Arg164 participates in substrate binding. FMN is bound at residue Lys251. The active-site Proton acceptor is His275. Arg278 is a substrate binding site. 306 to 330 serves as a coordination point for FMN; it reads DGGVRSGLDVVRMLALGARGVLIGR.

This sequence belongs to the FMN-dependent alpha-hydroxy acid dehydrogenase family. It depends on FMN as a cofactor.

Its subcellular location is the cell inner membrane. It carries out the reaction (S)-lactate + A = pyruvate + AH2. Its function is as follows. Catalyzes the conversion of L-lactate to pyruvate. Is coupled to the respiratory chain. This is L-lactate dehydrogenase from Caulobacter vibrioides (strain ATCC 19089 / CIP 103742 / CB 15) (Caulobacter crescentus).